The sequence spans 1360 residues: Zinc finger protein GLI1 (1360 aa).

Residues 198–245 form a disordered region; it reads DTIGSKRLEDGSEGDISSPASVGTQDPLLGLLDGRDDLEKDDGKHEPE. Basic and acidic residues predominate over residues 230–245; sequence DGRDDLEKDDGKHEPE. The segment at 250 to 275 adopts a C2H2-type 1 zinc-finger fold; sequence TNCHWESCTKEFDTQEHLVHHINNEH. Residues 298 to 306 form an interaction with DNA region; it reads KAQYMLVVH. C2H2-type zinc fingers lie at residues 316-340, 346-371, and 377-402; these read HKCT…LRSH, YVCE…NRTH, and YVCK…KTVH. 2 interaction with DNA regions span residues 360–365 and 390–396; these read ASDRAK and DPSSLRK. Disordered stretches follow at residues 390-434, 457-500, 718-740, and 1120-1213; these read DPSS…NVKG, ITLK…SFED, IIHP…RTGG, and YMNY…IQPQ. Residues 461–473 show a composition bias toward low complexity; the sequence is SQPSPGGQSSCSS. The span at 474 to 496 shows a compositional bias: polar residues; sequence ERSPLGSTNNNDSGVEMNANTGG. The span at 1134–1143 shows a compositional bias: low complexity; it reads SPSSQDSQSS. A compositionally biased stretch (polar residues) spans 1173–1190; that stretch reads RQHSVSSQSTYMGSPNQL.

This sequence belongs to the GLI C2H2-type zinc-finger protein family.

It localises to the cytoplasm. Its subcellular location is the nucleus. In terms of biological role, acts as a transcriptional activator. Binds to the DNA consensus sequence 5'-GACCACCCA-3'. May regulate the transcription of specific genes during normal development. Mediates SHH signaling. Plays a role in cell proliferation and differentiation via its role in SHH signaling. In Xenopus laevis (African clawed frog), this protein is Zinc finger protein GLI1 (gli1).